Here is a 299-residue protein sequence, read N- to C-terminus: 4-diphosphocytidyl-2-C-methyl-D-erythritol kinase (299 aa).

The active site involves Lys18. 104–114 (PIASGIGGGSS) serves as a coordination point for ATP. Asp146 is a catalytic residue.

It belongs to the GHMP kinase family. IspE subfamily.

The enzyme catalyses 4-CDP-2-C-methyl-D-erythritol + ATP = 4-CDP-2-C-methyl-D-erythritol 2-phosphate + ADP + H(+). Its pathway is isoprenoid biosynthesis; isopentenyl diphosphate biosynthesis via DXP pathway; isopentenyl diphosphate from 1-deoxy-D-xylulose 5-phosphate: step 3/6. Its function is as follows. Catalyzes the phosphorylation of the position 2 hydroxy group of 4-diphosphocytidyl-2C-methyl-D-erythritol. This chain is 4-diphosphocytidyl-2-C-methyl-D-erythritol kinase, found in Brucella abortus biovar 1 (strain 9-941).